The following is a 1098-amino-acid chain: Bifunctional helicase and thymine dioxygenase JBP2 (1098 aa).

The tract at residues 1–540 (MLNGLTRVST…PPLFVPTRLA (540 aa)) is thymine dioxygenase. Fe cation is bound by residues His-415, Asp-417, and His-465. A 2-oxoglutarate-binding site is contributed by Arg-479. The segment at 541–1098 (SHLAPVQLAA…RYQESVRESE (558 aa)) is DNA Helicase. A Helicase ATP-binding domain is found at 555–730 (VERTEKQSGC…YRLVGWVNKG (176 aa)). Residue 568–575 (MTMGLGKT) participates in ATP binding. Positions 681-684 (DEGH) match the DEAH box motif. Residues 897-1057 (VLVDIVLRVQ…ALPDELEDCA (161 aa)) enclose the Helicase C-terminal domain.

In the C-terminal section; belongs to the SNF2/RAD54 helicase family. It in the N-terminal section; belongs to the TET family. JBP2 subfamily. It depends on Fe(2+) as a cofactor.

It is found in the nucleus. It carries out the reaction ATP + H2O = ADP + phosphate + H(+). The catalysed reaction is thymine + 2-oxoglutarate + O2 = 5-hydroxymethyluracil + succinate + CO2. In terms of biological role, dioxygenase that catalyzes the first step of DNA base J (beta-d-glucosyl-HOMedU) biosynthesis by converting thymine to 5-hydroxymethyluracil (HOMedU). DNA base J is a hypermodified thymidine residue found in the genome of kinetoplastid parasites, which is localized primarily to repetitive DNA, namely the telomeres, and is implicated in the regulation of antigenic variation. Probably also acts as a DNA helicase. Recognizes and binds specific regions of the genome, hydrolyzes ATP and allows the DNA base J de novo synthesis. Involved in initial synthesis of DNA base J, JBP1 being able to act via the basal level of DNA base J and propagate further synthesis. In contrast to JBP1, it does not specifically bind DNA base J, however it binds chromatin. The polypeptide is Bifunctional helicase and thymine dioxygenase JBP2 (JBP2) (Leishmania major).